Reading from the N-terminus, the 466-residue chain is Glutamate--tRNA ligase 1 (466 aa).

The 'HIGH' region motif lies at 9-19 (PSPTGLLHIGN). The 'KMSKS' region signature appears at 238 to 242 (KLSKR). Lysine 241 serves as a coordination point for ATP.

The protein belongs to the class-I aminoacyl-tRNA synthetase family. Glutamate--tRNA ligase type 1 subfamily. In terms of assembly, monomer.

The protein resides in the cytoplasm. The enzyme catalyses tRNA(Glu) + L-glutamate + ATP = L-glutamyl-tRNA(Glu) + AMP + diphosphate. Its function is as follows. Catalyzes the attachment of glutamate to tRNA(Glu) in a two-step reaction: glutamate is first activated by ATP to form Glu-AMP and then transferred to the acceptor end of tRNA(Glu). This Gluconacetobacter diazotrophicus (strain ATCC 49037 / DSM 5601 / CCUG 37298 / CIP 103539 / LMG 7603 / PAl5) protein is Glutamate--tRNA ligase 1.